Here is a 305-residue protein sequence, read N- to C-terminus: NADH-ubiquinone oxidoreductase chain 1 (305 aa).

The next 8 membrane-spanning stretches (helical) occupy residues 3–23 (WVAV…VGFY), 71–91 (VGPF…GWLL), 99–119 (VFYV…VYGV), 145–165 (YEIP…VFMF), 175–195 (LFFF…CMLA), 221–241 (GGGF…SSVM), 246–266 (FFGG…IFFV), and 285–305 (WTVL…LVGV).

This sequence belongs to the complex I subunit 1 family.

Its subcellular location is the mitochondrion inner membrane. The catalysed reaction is a ubiquinone + NADH + 5 H(+)(in) = a ubiquinol + NAD(+) + 4 H(+)(out). Core subunit of the mitochondrial membrane respiratory chain NADH dehydrogenase (Complex I) that is believed to belong to the minimal assembly required for catalysis. Complex I functions in the transfer of electrons from NADH to the respiratory chain. The immediate electron acceptor for the enzyme is believed to be ubiquinone. The sequence is that of NADH-ubiquinone oxidoreductase chain 1 (ND1) from Mytilus edulis (Blue mussel).